The chain runs to 172 residues: METRKPAERLALPYSLRTAPLGVPGTLPGLPRRDPLRVALRLDAACWEWARSGCARGWQYLPVPLDSAFEPAFLRKRNERERQRVRCVNEGYARLRDHLPRELADKRLSKVETLRAAIDYIKHLQELLERQAWGLEGAAGAVPQRRAECNSDGESKASSAPSPSSEPEEGGS.

Residues 72–124 (AFLRKRNERERQRVRCVNEGYARLRDHLPRELADKRLSKVETLRAAIDYIKHL) enclose the bHLH domain. The disordered stretch occupies residues 144 to 172 (QRRAECNSDGESKASSAPSPSSEPEEGGS). The span at 145–155 (RRAECNSDGES) shows a compositional bias: basic and acidic residues. A compositionally biased stretch (low complexity) spans 156-165 (KASSAPSPSS).

Expressed in skin. 7-fold higher expression in fetal skin than in adult skin. Weak expression also detected in fetal lung, aorta and brain, and in adult stomach, kidney, ovary and breast.

It localises to the nucleus. Could be a transcriptional regulator involved in skin development. The protein is Achaete-scute homolog 4 (ASCL4) of Homo sapiens (Human).